The primary structure comprises 49 residues: Defensin Tm-AMP-D1.2 (49 aa).

4 disulfide bridges follow: Cys3–Cys49, Cys14–Cys34, Cys20–Cys43, and Cys24–Cys45.

Plant defense peptide. In Triticum monococcum (Einkorn wheat), this protein is Defensin Tm-AMP-D1.2.